Consider the following 356-residue polypeptide: Tricetin 3',4',5'-O-trimethyltransferase (356 aa).

Residue 123–129 (MNQDKVL) participates in substrate binding. The interval 155–173 (AFEYHGTDPRFNRVFNEGM) is substrate binding. G201, D224, D244, M245, and K258 together coordinate S-adenosyl-L-methionine. H262 (proton acceptor) is an active-site residue.

Belongs to the class I-like SAM-binding methyltransferase superfamily. Cation-independent O-methyltransferase family. COMT subfamily. Homodimer. The monomer is fully active and dimerization is not required for sequential methylation. As to expression, expressed in roots, stems and leaves.

The catalysed reaction is tricetin + 3 S-adenosyl-L-methionine = 3',4',5'-O-trimethyltricetin + 3 S-adenosyl-L-homocysteine + 3 H(+). Functionally, flavonoid B-ring-specific O-methyltransferase with a preference for flavones &gt; dihydroflavones &gt; flavonols that possess at least two B-ring hydroxyl groups. Active with tricetin, 5-hydroxyferulic acid, luteolin, quercitin, eriodictyol, quercetagetin, taxifolin, gossypetin and myricetin. No activity with naringenin, apigenin, kaempferol, 7,8-dihydroxy- or 5,7,8-trihydroxy flavones, chlorogenic acid, gallic acid or daphnetin. Catalyzes the sequential O-methylation of tricetin via 3'-O-methyltricetin, 3',5'-O-methyltricetin to 3',4',5'-O-trimethyltricetin. May also be involved in S lignin biosynthesis. In Triticum aestivum (Wheat), this protein is Tricetin 3',4',5'-O-trimethyltransferase (OMT2).